The sequence spans 145 residues: Cell division protein SepF (145 aa).

Over residues 23-41 (PQEVSKTKDENAKPKHETP) the composition is skewed to basic and acidic residues. The disordered stretch occupies residues 23–42 (PQEVSKTKDENAKPKHETPK).

It belongs to the SepF family. In terms of assembly, homodimer. Interacts with FtsZ.

The protein localises to the cytoplasm. Its function is as follows. Cell division protein that is part of the divisome complex and is recruited early to the Z-ring. Probably stimulates Z-ring formation, perhaps through the cross-linking of FtsZ protofilaments. Its function overlaps with FtsA. The polypeptide is Cell division protein SepF (Caldicellulosiruptor bescii (strain ATCC BAA-1888 / DSM 6725 / KCTC 15123 / Z-1320) (Anaerocellum thermophilum)).